We begin with the raw amino-acid sequence, 879 residues long: Alanine--tRNA ligase (879 aa).

Zn(2+)-binding residues include histidine 566, histidine 570, cysteine 668, and histidine 672.

It belongs to the class-II aminoacyl-tRNA synthetase family. Requires Zn(2+) as cofactor.

Its subcellular location is the cytoplasm. It carries out the reaction tRNA(Ala) + L-alanine + ATP = L-alanyl-tRNA(Ala) + AMP + diphosphate. Functionally, catalyzes the attachment of alanine to tRNA(Ala) in a two-step reaction: alanine is first activated by ATP to form Ala-AMP and then transferred to the acceptor end of tRNA(Ala). Also edits incorrectly charged Ser-tRNA(Ala) and Gly-tRNA(Ala) via its editing domain. The polypeptide is Alanine--tRNA ligase (Clostridium tetani (strain Massachusetts / E88)).